Consider the following 241-residue polypeptide: NADPH-dependent FMN reductase ArsH (241 aa).

Position 43–50 (43–50 (SLRTVSYS)) interacts with FMN.

It belongs to the ArsH family. In terms of assembly, homotetramer. FMN serves as cofactor.

Functionally, has NADPH-dependent FMN reductase activity. No activity with NADH. May play a role in resistance to heavy metal toxicity. The sequence is that of NADPH-dependent FMN reductase ArsH from Rhizobium meliloti (strain 1021) (Ensifer meliloti).